Reading from the N-terminus, the 282-residue chain is Halorhodopsin (282 aa).

Topologically, residues 1–29 (MMETAADALASGTVPLEMTQTQIFEAIQG) are extracellular. Residues 30 to 55 (DTLLASSLWINIALAGLSILLFVYMG) form a helical membrane-spanning segment. Residues 56-61 (RNLEDP) are Cytoplasmic-facing. A helical membrane pass occupies residues 62 to 85 (RAQLIFVATLMVPLVSISSYTGLV). The Extracellular segment spans residues 86-109 (SGLTVSFLEMPAGHALAGQEVLTP). Residues 110–131 (WGRYLTWALSTPMILVALGLLA) form a helical membrane-spanning segment. The Cytoplasmic segment spans residues 132-134 (GSN). The helical transmembrane segment at 135 to 158 (ATKLFTAVTADIGMCVTGLAAALT) threads the bilayer. Over 159–161 (TSS) the chain is Extracellular. The helical transmembrane segment at 162-184 (YLLRWVWYVISCAFFVVVLYVLL) threads the bilayer. Residues 185-196 (AEWAEDAEVAGT) lie on the Cytoplasmic side of the membrane. The chain crosses the membrane as a helical span at residues 197–220 (AEIFNTLKLLTVVLWLGYPIFWAL). The Extracellular segment spans residues 221 to 229 (GAEGLAVLD). Residues 230 to 258 (VAVTSWAYSGMDIVAKYLFAFLLLRWVVD) form a helical membrane-spanning segment. An N6-(retinylidene)lysine modification is found at Lys-245. Residues 259–282 (NERTVAGMAAGLGAPLARCAPADD) lie on the Cytoplasmic side of the membrane.

It belongs to the archaeal/bacterial/fungal opsin family.

Its subcellular location is the cell membrane. Its function is as follows. Light-driven chloride pump. The chain is Halorhodopsin (hop) from Halorubrum sodomense.